We begin with the raw amino-acid sequence, 504 residues long: Procardosin-A (504 aa).

A signal peptide spans 1 to 24; it reads MGTSIKANVLALFLFYLLSPTVFS. The propeptide occupies 25-68; sequence VSDDGLIRIGLKKRKVDRIDQLRGRRALMEGNARKDFGFRGTVR. Residues 85-501 form the Peptidase A1 domain; sequence YFGEIGIGTP…DYGNLLVGFA (417 aa). D103 is an active-site residue. The cysteines at positions 116 and 122 are disulfide-linked. Residue N139 is glycosylated (N-linked (GlcNAc...) asparagine). The RGD motif motif lies at 246–248; that stretch reads RGD. A disulfide bond links C277 and C281. D286 is a catalytic residue. A propeptide spans 310–414 (plant-specific insert); the sequence is GVMNQQCKTV…YANELCEHLS (105 aa). A Saposin B-type domain is found at 311 to 416; sequence VMNQQCKTVV…NELCEHLSTS (106 aa). 4 cysteine pairs are disulfide-bonded: C316/C410, C341/C382, C347/C379, and C424/C461. N-linked (GlcNAc...) asparagine glycosylation occurs at N432. A KGE motif motif is present at residues 455 to 457; sequence KGE.

This sequence belongs to the peptidase A1 family. Heterodimer of a light chain and a heavy chain. An intermediate form (35 kDa and 30 kDa subunits) is produced first, and undergoes proteolytic processing to remove the internal plant-specific insert (PSI) and the propeptide. There is some heterogeniety at the cleavage site. Interacts (via RGD or KGE motifs) with PLD1 (via C2 domain). N-glycosylated. Glycans found at Asn-139 include approximately 6% oligomannose, 82% oligosaccharides of the plant modified type with proximal fucose but without xylose and 6% oligosaccharides of the plant modified type with proximal fucose and xylose. Glycans found at Asn-432 include 14% oligosaccharides of the plant modified type with proximal fucose but without xylose and 86% oligosaccharides of the plant modified type with proximal fucose and xylose. In terms of tissue distribution, detected only in pistils, not in seeds, roots, midribs, bracts, stamens, pollen, vascular or supporting tissues. Detected in seeds. High amounts are detected in the broad outer region of the upper portion of the stigma, towards the lower portion of the stigma it accumulates at the periphery. Within the stigma, expressed mainly in the epidermic papillae, lower levels are found in the cortical parenchyma. Present mainly in epidermal cells within the stye (at protein level). Expressed in young flower buds, and at lower levels in seeds, pollen and bracteas, but not in roots or leaves.

Its subcellular location is the microsome membrane. The protein localises to the protein storage vacuole. It localises to the secreted. It is found in the cell wall. The protein resides in the extracellular space. Its subcellular location is the extracellular matrix. Its activity is regulated as follows. Inhibited by the specific aspartic proteinase inhibitors diazoacetyl-noleucine methyl ester and pepstatin. In terms of biological role, aspartic proteinase with a high preference for bonds between hydrophobic residues. Cleaves alpha-lactalbumin but not beta-lactoglobulin. In Cynara cardunculus (Cardoon), this protein is Procardosin-A.